We begin with the raw amino-acid sequence, 305 residues long: Glycine--tRNA ligase alpha subunit (305 aa).

This sequence belongs to the class-II aminoacyl-tRNA synthetase family. Tetramer of two alpha and two beta subunits.

The protein resides in the cytoplasm. It carries out the reaction tRNA(Gly) + glycine + ATP = glycyl-tRNA(Gly) + AMP + diphosphate. The sequence is that of Glycine--tRNA ligase alpha subunit from Streptococcus sanguinis (strain SK36).